The primary structure comprises 581 residues: Guanine nucleotide-binding protein-like 3 homolog (581 aa).

Positions 1 to 49 (MALKRLKTKKSKRLTGRLKHKIEKKVRDHNKKERRAAKKNPKKGSKKQK) are enriched in basic residues. Positions 1–50 (MALKRLKTKKSKRLTGRLKHKIEKKVRDHNKKERRAAKKNPKKGSKKQKL) are disordered. The stretch at 64-108 (LKEVEEAKQRQEAERLARREAFKAEREQNKFKTLESMVEDADMRS) forms a coiled coil. Serine 99 is subject to Phosphoserine. The CP-type G domain occupies 141–325 (FKEFRKVIEN…LIDCPGIVFT (185 aa)). GTP-binding positions include 189 to 192 (NKAD), 274 to 281 (GIPNVGKS), and 318 to 321 (DCPG). Positions 500-517 (KPAKGRKRKLDEEKEKVD) are enriched in basic and acidic residues. The disordered stretch occupies residues 500–519 (KPAKGRKRKLDEEKEKVDPS).

Belongs to the TRAFAC class YlqF/YawG GTPase family.

The protein resides in the nucleus. Its subcellular location is the nucleolus. May play a role in regulating cellular proliferation. In Drosophila melanogaster (Fruit fly), this protein is Guanine nucleotide-binding protein-like 3 homolog (Ns1).